Here is an 89-residue protein sequence, read N- to C-terminus: Small ribosomal subunit protein uS15 (89 aa).

It belongs to the universal ribosomal protein uS15 family. As to quaternary structure, part of the 30S ribosomal subunit. Forms a bridge to the 50S subunit in the 70S ribosome, contacting the 23S rRNA.

In terms of biological role, one of the primary rRNA binding proteins, it binds directly to 16S rRNA where it helps nucleate assembly of the platform of the 30S subunit by binding and bridging several RNA helices of the 16S rRNA. Functionally, forms an intersubunit bridge (bridge B4) with the 23S rRNA of the 50S subunit in the ribosome. The polypeptide is Small ribosomal subunit protein uS15 (Desulforapulum autotrophicum (strain ATCC 43914 / DSM 3382 / VKM B-1955 / HRM2) (Desulfobacterium autotrophicum)).